The chain runs to 190 residues: Segregation and condensation protein B (190 aa).

The protein belongs to the ScpB family. In terms of assembly, homodimer. Homodimerization may be required to stabilize the binding of ScpA to the Smc head domains. Component of a cohesin-like complex composed of ScpA, ScpB and the Smc homodimer, in which ScpA and ScpB bind to the head domain of Smc. The presence of the three proteins is required for the association of the complex with DNA.

It is found in the cytoplasm. In terms of biological role, participates in chromosomal partition during cell division. May act via the formation of a condensin-like complex containing Smc and ScpA that pull DNA away from mid-cell into both cell halves. The chain is Segregation and condensation protein B from Bacillus mycoides (strain KBAB4) (Bacillus weihenstephanensis).